Consider the following 596-residue polypeptide: Ubiquilin-4 (596 aa).

Residues Ile-13–Lys-87 enclose the Ubiquitin-like domain. Glycyl lysine isopeptide (Lys-Gly) (interchain with G-Cter in SUMO2) cross-links involve residues Lys-23 and Lys-62. Residues Gln-89–Ser-148 form a disordered region. 2 stretches are compositionally biased toward low complexity: residues Thr-93–Pro-119 and Ser-139–Ser-148. Ser-139 carries the phosphoserine modification. STI1 domains are found at residues Asn-187–Met-224 and Glu-225–Met-256. The residue at position 282 (Thr-282) is a Phosphothreonine. Residues Gly-297–Phe-361 form a disordered region. The span at Ser-302–Ser-313 shows a compositional bias: low complexity. The residue at position 313 (Ser-313) is a Phosphoserine. Over residues Leu-324–Ser-335 the composition is skewed to pro residues. Residues Gly-339 to Gly-349 are compositionally biased toward gly residues. Over residues Gln-352 to Phe-361 the composition is skewed to polar residues. 2 STI1 domains span residues Asn-388 to Leu-435 and Leu-439 to Leu-471. Positions Val-482–Gln-528 are disordered. Residues Gly-499 to Pro-513 show a composition bias toward polar residues. Residues Pro-548–Ser-593 enclose the UBA domain.

In terms of assembly, homooligomer. Binds signal sequences of proteins that are targeted to the endoplasmic reticulum. Interacts (via UBA domain) with GJA1 (not ubiquitinated) and with ubiquitin; both compete for the same binding site. Interacts (via UBA domain) with ubiquitin and with polyubiquitin chains. Interacts (via ubiquitin-like domain) with PSMD2 and PSMD4, regulatory subunits of the 26S proteasome. Interacts with ATXN1/SCA1; interaction with ATXN1 inhibits polyubiquitination of UBQLN4 and interferes with PSMD4 binding. Interacts with HERPUD1. Interacts (via ubiquitin-like domain) with UBQLN1 (via UBA domain). Interacts with UBQLN2. Interacts (via STI1 1 and 2 domains) with MAP1LC3A/B/C. Interacts with BAG6. Interacts with MRE11 (when ubiquitinated); interaction with ubiquitinated MRE11 leads to MRE11 removal from chromatin. Interacts with DESI1/POST; leading to nuclear export. Interacts with BCL2A1 and BCL2L10. Phosphorylated by ATM at Ser-313 in response to DNA damage, leading to localization in the nucleus and recruitment to sites of DNA damage. In terms of processing, ubiquitinated; this does not lead to proteasomal degradation. May undergo both 'Lys-48'- and 'Lys-63'-linked polyubiquitination. Detected in testis, ovary, thyroid, kidney, thymus, heart, liver, lung and spleen (at protein level). Highly expressed in heart, skeletal muscle, kidney, liver and brain. Detected at lower levels in testis, lung and spleen.

Its subcellular location is the nucleus. The protein localises to the cytoplasm. The protein resides in the chromosome. It localises to the endoplasmic reticulum. It is found in the perinuclear region. Its subcellular location is the cytoplasmic vesicle. The protein localises to the autophagosome. Its function is as follows. Regulator of protein degradation that mediates the proteasomal targeting of misfolded, mislocalized or accumulated proteins. Acts by binding polyubiquitin chains of target proteins via its UBA domain and by interacting with subunits of the proteasome via its ubiquitin-like domain. Key regulator of DNA repair that represses homologous recombination repair: in response to DNA damage, recruited to sites of DNA damage following phosphorylation by ATM and acts by binding and removing ubiquitinated MRE11 from damaged chromatin, leading to MRE11 degradation by the proteasome. MRE11 degradation prevents homologous recombination repair, redirecting double-strand break repair toward non-homologous end joining (NHEJ). Specifically recognizes and binds mislocalized transmembrane-containing proteins and targets them to proteasomal degradation. Collaborates with DESI1/POST in the export of ubiquitinated proteins from the nucleus to the cytoplasm. Plays a role in the regulation of the proteasomal degradation of non-ubiquitinated GJA1. Acts as an adapter protein that recruits UBQLN1 to the autophagy machinery. Mediates the association of UBQLN1 with autophagosomes and the autophagy-related protein LC3 (MAP1LC3A/B/C) and may assist in the maturation of autophagosomes to autolysosomes by mediating autophagosome-lysosome fusion. The polypeptide is Ubiquilin-4 (Mus musculus (Mouse)).